The primary structure comprises 307 residues: UPF0276 protein PM0211 (307 aa).

It belongs to the UPF0276 family.

This is UPF0276 protein PM0211 from Pasteurella multocida (strain Pm70).